A 588-amino-acid chain; its full sequence is Probable metalloprotease ARX1 (588 aa).

The protein belongs to the peptidase M24 family. As to quaternary structure, component of the nucleoplasmic and cytoplasmic pre-60S ribosomal particles.

Its subcellular location is the cytoplasm. It localises to the nucleus. Probable metalloprotease involved in proper assembly of pre-ribosomal particles during the biogenesis of the 60S ribosomal subunit. Accompanies the pre-60S particles to the cytoplasm. This Candida glabrata (strain ATCC 2001 / BCRC 20586 / JCM 3761 / NBRC 0622 / NRRL Y-65 / CBS 138) (Yeast) protein is Probable metalloprotease ARX1 (ARX1).